The chain runs to 853 residues: Protein translocase subunit SecA (853 aa).

Residues Gln-77, 95–99 (GEGKT), and Asp-532 contribute to the ATP site.

The protein belongs to the SecA family. As to quaternary structure, monomer and homodimer. Part of the essential Sec protein translocation apparatus which comprises SecA, SecYEG and auxiliary proteins SecDF. Other proteins may also be involved.

It localises to the cell inner membrane. Its subcellular location is the cytoplasm. It carries out the reaction ATP + H2O + cellular proteinSide 1 = ADP + phosphate + cellular proteinSide 2.. In terms of biological role, part of the Sec protein translocase complex. Interacts with the SecYEG preprotein conducting channel. Has a central role in coupling the hydrolysis of ATP to the transfer of proteins into and across the cell membrane, serving as an ATP-driven molecular motor driving the stepwise translocation of polypeptide chains across the membrane. This Thermosipho melanesiensis (strain DSM 12029 / CIP 104789 / BI429) protein is Protein translocase subunit SecA.